The following is a 475-amino-acid chain: Putative UDP-glucose glucosyltransferase (475 aa).

Belongs to the UDP-glycosyltransferase family.

The chain is Putative UDP-glucose glucosyltransferase from Fragaria ananassa (Strawberry).